We begin with the raw amino-acid sequence, 601 residues long: Glutathione-regulated potassium-efflux system protein KefB (601 aa).

A run of 13 helical transmembrane segments spans residues 4-24 (SDLLTAGVMFLFAAVAAVPLA), 29-49 (IGAVLGYLLAGIAIGPWGLGF), 55-75 (EILHFSELGVVFLMFIIGLEL), 87-107 (IFGVGAAQVMLSAVVLAGLLM), 115-135 (AAVIGGIGLAMSSTAMALQLM), 152-172 (VLLFQDLAVIPALALVPLLAG), 177-197 (HFDWIKVGMKVLAFAGMLIGG), 207-227 (FIADSGVREVFTAATLLLVLG), 230-250 (LFMDALGLSMALGTFIAGVLL), 262-282 (AIDPFKGLLLGLFFISVGMSL), 284-304 (LGVLYTHLLWVAVSVIVLVAV), 324-344 (MQFAGVLSQGGEFAFVLFSTA), and 356-376 (SLLLVTVTLSMMTTPLLMKLV). The region spanning 400–519 (KPQVIVVGFG…AGVTQFSRET (120 aa)) is the RCK N-terminal domain.

This sequence belongs to the monovalent cation:proton antiporter 2 (CPA2) transporter (TC 2.A.37) family. KefB subfamily. Interacts with the regulatory subunit KefG.

The protein resides in the cell inner membrane. Pore-forming subunit of a potassium efflux system that confers protection against electrophiles. Catalyzes K(+)/H(+) antiport. In Citrobacter koseri (strain ATCC BAA-895 / CDC 4225-83 / SGSC4696), this protein is Glutathione-regulated potassium-efflux system protein KefB.